Consider the following 176-residue polypeptide: MKIPKEGDFITIQSYKHDGNLHRTWRDTMVLKTNENSIIGVNDHTLVTESDDRRWVTREPAIVYFHKKFWFNIIAMIREEGVSYYCNLASPFVLDNEALKYIDYDLDVKVFKDGEKKLLDVEEYERHRRNMHYPKEIDHILKENVKILVDWINNEKGPFSKEYVEIWYNRYHQLKK.

Arg23 functions as the Proton donor in the catalytic mechanism. Residues Asn87, Asp103, Asp105, Asp107, Asp120, and Glu123 each coordinate Mg(2+).

The protein belongs to the Ntdp family. Mg(2+) is required as a cofactor.

The enzyme catalyses a ribonucleoside 5'-triphosphate + H2O = a ribonucleoside 5'-diphosphate + phosphate + H(+). It carries out the reaction a ribonucleoside 5'-diphosphate + H2O = a ribonucleoside 5'-phosphate + phosphate + H(+). Its function is as follows. Has nucleoside phosphatase activity towards nucleoside triphosphates and nucleoside diphosphates. This chain is Nucleoside triphosphate/diphosphate phosphatase, found in Lactococcus lactis subsp. cremoris (strain MG1363).